A 552-amino-acid chain; its full sequence is Steroid transmembrane transporter SLC22A24 (552 aa).

12 helical membrane-spanning segments follow: residues 16–36 (FQIL…PHML), 144–164 (LISV…LIFG), 178–198 (CCLL…TFPV), 204–224 (FLGG…MSEW), 235–255 (GIIL…GFVI), 267–287 (IPLF…QWLI), 350–370 (IFYL…LMLN), 378–398 (IFLF…AVLL), 407–427 (ISQM…IFLS), 435–455 (VALA…HTVH), 469–489 (IGLN…LMIL), and 496–516 (LPWI…LLLP). The tract at residues 524 to 552 (PNTIQDVENNRRDSRKTKQEDISMKVTQF) is disordered. The segment covering 531–546 (ENNRRDSRKTKQEDIS) has biased composition (basic and acidic residues).

This sequence belongs to the major facilitator (TC 2.A.1) superfamily. Organic cation transporter (TC 2.A.1.19) family.

It is found in the cell membrane. The enzyme catalyses estrone 3-sulfate(out) + glutarate(in) = estrone 3-sulfate(in) + glutarate(out). The catalysed reaction is 17beta-estradiol 17-O-(beta-D-glucuronate)(out) + glutarate(in) = 17beta-estradiol 17-O-(beta-D-glucuronate)(in) + glutarate(out). It catalyses the reaction taurocholate(out) + glutarate(in) = taurocholate(in) + glutarate(out). It carries out the reaction glycocholate(out) + glutarate(in) = glycocholate(in) + glutarate(out). The enzyme catalyses dehydroepiandrosterone 3-sulfate(out) + glutarate(in) = dehydroepiandrosterone 3-sulfate(in) + glutarate(out). The catalysed reaction is glutarate(in) + succinate(out) = glutarate(out) + succinate(in). Functionally, renal transmembrane organic anion/dicarboxylate exchanger that participates in the reabsorption of conjugated steroids, as well as bile acids, driven by an outward gradient of dicarboxylates such as glutarate or succinate. Transports taurocholate, estrone 3-sulfate, and estradiol-17-glucuronide (17beta-estradiol 17-O-(beta-D-glucuronate)), but not androstanediol glucuronide (5alpha-androstane-3alpha,17beta-diol 3-O-(beta-D-glucuronate)). The protein is Steroid transmembrane transporter SLC22A24 of Equus caballus (Horse).